Reading from the N-terminus, the 108-residue chain is Thioredoxin (108 aa).

The 107-residue stretch at 2–108 folds into the Thioredoxin domain; sequence SEHIVNVTDA…QLAAFLDANI (107 aa). Cysteines 33 and 36 form a disulfide.

It belongs to the thioredoxin family.

Functionally, participates in various redox reactions through the reversible oxidation of its active center dithiol to a disulfide and catalyzes dithiol-disulfide exchange reactions. The sequence is that of Thioredoxin (trxA) from Pseudomonas aeruginosa (strain ATCC 15692 / DSM 22644 / CIP 104116 / JCM 14847 / LMG 12228 / 1C / PRS 101 / PAO1).